A 622-amino-acid polypeptide reads, in one-letter code: Probable potassium transport system protein Kup 1 (622 aa).

Transmembrane regions (helical) follow at residues 7–27, 50–70, 96–116, 132–152, 165–185, 210–230, 244–264, 282–302, 334–354, 360–380, 391–411, and 416–436; these read LLVLALGSVGVVYGDIGTSPL, LISLMIWALTIIVTIKYVLFL, TAILFFMGIAGAALFIGDAMI, VTPALSDYVVPIAVVILLLLF, FFGPITLIWFVVMGTIGFVHI, VGIVVLGAVFLTVTGAEALYA, WFTVVFPALTLNYLGQGAFVL, ALLPAVILATAATIIASQAVI, IYLPNVNTLLMFGVMALVFLF, LATAYGISVTGAMVVTTVLSF, TWWAAGALLPLFVLEFVFLGA, and IHDGGYVPILIAATFIVIMWT.

It belongs to the HAK/KUP transporter (TC 2.A.72) family.

The protein localises to the cell inner membrane. It carries out the reaction K(+)(in) + H(+)(in) = K(+)(out) + H(+)(out). In terms of biological role, transport of potassium into the cell. Likely operates as a K(+):H(+) symporter. This chain is Probable potassium transport system protein Kup 1, found in Rhizobium meliloti (strain 1021) (Ensifer meliloti).